The primary structure comprises 774 residues: Potassium/sodium hyperpolarization-activated cyclic nucleotide-gated channel 3 (774 aa).

A disordered region spans residues 1 to 48; the sequence is MEAEQRPAAGASEGATPGLEAVPPVAPPPATAASGPIPKSGPEPKRRH. Over 1-97 the chain is Cytoplasmic; it reads MEAEQRPAAG…PYSDFRFYWD (97 aa). An involved in subunit assembly region spans residues 46-91; that stretch reads RRHLGTLLQPTVNKFSLRVFGSHKAVEIEQERVKSAGAWIIHPYSD. A helical membrane pass occupies residues 98 to 118; the sequence is LIMLLLMVGNLIVLPVGITFF. Residues 119–124 are Extracellular-facing; it reads KEENSP. The helical transmembrane segment at 125 to 145 threads the bilayer; it reads PWIVFNVLSDTFFLLDLVLNF. The Cytoplasmic portion of the chain corresponds to 146-171; the sequence is RTGIVVEEGAEILLAPRAIRTRYLRT. The helical transmembrane segment at 172-192 threads the bilayer; that stretch reads WFLVDLISSIPVDYIFLVVEL. Residues 193–201 are Extracellular-facing; sequence EPRLDAEVY. Residues 202–222 traverse the membrane as a helical; Voltage-sensor segment; it reads KTARALRIVRFTKILSLLRLL. Residues 223–253 lie on the Cytoplasmic side of the membrane; sequence RLSRLIRYIHQWEEIFHMTYDLASAVVRIFN. The chain crosses the membrane as a helical span at residues 254–274; it reads LIGMMLLLCHWDGCLQFLVPM. The Extracellular portion of the chain corresponds to 275–297; the sequence is LQDFPPDCWVSINHMVNHSWGRQ. An N-linked (GlcNAc...) asparagine glycan is attached at asparagine 291. An intramembrane region (pore-forming) is located at residues 298 to 319; the sequence is YSHALFKAMSHMLCIGYGQQAP. Residues 320–329 lie on the Extracellular side of the membrane; that stretch reads VGMPDVWLTM. Residues 330–350 form a helical membrane-spanning segment; it reads LSMIVGATCYAMFIGHATALI. Residues 351–774 lie on the Cytoplasmic side of the membrane; the sequence is QSLDSSRRQY…PRGLQLSANM (424 aa). Residues 354–774 form an interaction with KCTD3 region; sequence DSSRRQYQEK…PRGLQLSANM (421 aa). The 3',5'-cyclic AMP site is built by glycine 492, glutamate 493, cysteine 495, arginine 502, threonine 503, arginine 543, and arginine 546. Phosphoserine is present on serine 634. Positions 682–774 are disordered; sequence SLSRAGRSQV…PRGLQLSANM (93 aa). Residues 751–763 show a composition bias toward pro residues; the sequence is TAQPPRPPVPEPA.

It belongs to the potassium channel HCN family. Homotetramer. The potassium channel is composed of a homo- or heterotetrameric complex of pore-forming subunits. Interacts with HCN11. Interacts with KCTD3; this interaction increases cell surface expression and current density of this channel. Interacts with PEX5L. As to expression, detected in brain.

The protein localises to the cell membrane. The enzyme catalyses K(+)(in) = K(+)(out). The catalysed reaction is Na(+)(in) = Na(+)(out). With respect to regulation, unlike HCN2 and HCN4, HCN3 is insensitive to cyclic nucleotides, such as cAMP or cGMP. This lack of sensitivity of HCN3, despite harboring a functional cyclic nucleotide-binding domain (CNBD), may be explained by its shorter C-terminal sequence, which may alter the normal autoinhibition of the channel. Inhibited by Cs(1+) and ZD7288. Phosphatidylinositol-4,5-bisphosphate (PIP(2)) shifts HCN3 activation to more depolarized potentials and accelerated activation kinetics. Its function is as follows. Hyperpolarization-activated ion channel that are permeable to sodium and potassium ions, with an about 3:1 preference for potassium ions. Contributes to the native pacemaker currents in heart (If) and in neurons (Ih). In particular, plays a pivotal role in maintaining excitability and promoting rhythmic burst firing within hypothalamic nuclei. Exerts a significant influence on the configuration of the cardiac action potential waveform. Does not appear to play a prominent role in the processing of acute, neuropathic, or inflammatory pain. The protein is Potassium/sodium hyperpolarization-activated cyclic nucleotide-gated channel 3 (HCN3) of Homo sapiens (Human).